The primary structure comprises 458 residues: Argininosuccinate lyase (458 aa).

Belongs to the lyase 1 family. Argininosuccinate lyase subfamily.

The protein localises to the cytoplasm. The enzyme catalyses 2-(N(omega)-L-arginino)succinate = fumarate + L-arginine. It functions in the pathway amino-acid biosynthesis; L-arginine biosynthesis; L-arginine from L-ornithine and carbamoyl phosphate: step 3/3. The chain is Argininosuccinate lyase from Glaesserella parasuis serovar 5 (strain SH0165) (Haemophilus parasuis).